A 436-amino-acid chain; its full sequence is 3-ketoacyl-CoA thiolase (436 aa).

Catalysis depends on Cys-99, which acts as the Acyl-thioester intermediate. Active-site proton acceptor residues include His-392 and Cys-422.

It belongs to the thiolase-like superfamily. Thiolase family. In terms of assembly, heterotetramer of two alpha chains (FadJ) and two beta chains (FadI).

It localises to the cytoplasm. The enzyme catalyses an acyl-CoA + acetyl-CoA = a 3-oxoacyl-CoA + CoA. Its pathway is lipid metabolism; fatty acid beta-oxidation. In terms of biological role, catalyzes the final step of fatty acid oxidation in which acetyl-CoA is released and the CoA ester of a fatty acid two carbons shorter is formed. The protein is 3-ketoacyl-CoA thiolase of Shewanella baltica (strain OS185).